The following is a 244-amino-acid chain: Ethylene-responsive transcription factor 1 (244 aa).

The segment at residues 106–164 (HYRGVRQRPWGKFAAEIRDPAKNGARVWLGTYESAEEAALAYGKAAFRMRGTKALLNFP) is a DNA-binding region (AP2/ERF). Residues 186 to 198 (SASSSVSSASESG) show a composition bias toward low complexity. The interval 186–214 (SASSSVSSASESGSPKRRRKGVAAKQAEL) is disordered.

It belongs to the ethylene-response factor family. Class 1 subfamily. In terms of tissue distribution, present in stems.

It is found in the nucleus. Its function is as follows. Involved in the regulation of gene expression during fruit ripening, by stress factors and by components of stress signal transduction pathways. Transcription factor that binds to the GCC-box pathogenesis-related promoter element. Probably acts as a transcriptional activator and may be involved in disease resistance pathways. The polypeptide is Ethylene-responsive transcription factor 1 (ERF1) (Solanum lycopersicum (Tomato)).